A 230-amino-acid polypeptide reads, in one-letter code: N-(5'-phosphoribosyl)anthranilate isomerase (230 aa).

The protein belongs to the TrpF family.

It carries out the reaction N-(5-phospho-beta-D-ribosyl)anthranilate = 1-(2-carboxyphenylamino)-1-deoxy-D-ribulose 5-phosphate. Its pathway is amino-acid biosynthesis; L-tryptophan biosynthesis; L-tryptophan from chorismate: step 3/5. The chain is N-(5'-phosphoribosyl)anthranilate isomerase from Ralstonia nicotianae (strain ATCC BAA-1114 / GMI1000) (Ralstonia solanacearum).